The primary structure comprises 168 residues: mRNA stability protein IGO1 (168 aa).

Over residues 1 to 13 the composition is skewed to low complexity; the sequence is MSNENLSPNSSNP. The segment at 1–31 is disordered; the sequence is MSNENLSPNSSNPDLTKLNNGESGTIDTSKF. A compositionally biased stretch (polar residues) spans 17 to 31; the sequence is KLNNGESGTIDTSKF. Ser-32 and Ser-64 each carry phosphoserine. Residues 125-168 are disordered; sequence KEGSISSGPPSSNNGTIGGGSTSSTPVGNHSSSSSSLYTESPIR. 2 stretches are compositionally biased toward low complexity: residues 127-139 and 146-168; these read GSISSGPPSSNNG and TSSTPVGNHSSSSSSLYTESPIR.

It belongs to the endosulfine family. Interacts with RIM15, DHH1, PBP1, PBP4 and LSM12. In terms of processing, phosphorylated at Ser-64 by RIM15.

Required for TORC1 to properly control gene expression and chronological life span. Plays an essential role in initiation of the G0 program by preventing the degradation of specific nutrient-regulated mRNAs via the 5'-3' mRNA decay pathway. This is mRNA stability protein IGO1 (IGO1) from Saccharomyces cerevisiae (strain ATCC 204508 / S288c) (Baker's yeast).